The sequence spans 370 residues: Pyruvate dehydrogenase E1 component subunit alpha (370 aa).

In terms of assembly, heterodimer of an alpha and a beta chain. Thiamine diphosphate is required as a cofactor.

The catalysed reaction is N(6)-[(R)-lipoyl]-L-lysyl-[protein] + pyruvate + H(+) = N(6)-[(R)-S(8)-acetyldihydrolipoyl]-L-lysyl-[protein] + CO2. In terms of biological role, the pyruvate dehydrogenase complex catalyzes the overall conversion of pyruvate to acetyl-CoA and CO(2). It contains multiple copies of three enzymatic components: pyruvate dehydrogenase (E1), dihydrolipoamide acetyltransferase (E2) and lipoamide dehydrogenase (E3). This chain is Pyruvate dehydrogenase E1 component subunit alpha (pdhA), found in Staphylococcus aureus (strain MRSA252).